Consider the following 130-residue polypeptide: UPF0713 protein YngL (130 aa).

3 helical membrane passes run 4 to 25, 62 to 84, and 89 to 111; these read LSFL…LIVF, MLNC…YLFL, and IPLI…VGVG.

This sequence belongs to the UPF0713 family.

Its subcellular location is the cell membrane. This Bacillus subtilis (strain 168) protein is UPF0713 protein YngL (yngL).